Reading from the N-terminus, the 594-residue chain is Tripeptidyl-peptidase sed4 (594 aa).

The signal sequence occupies residues 1–20; it reads MLSSTLYAGWLLSLAAPALC. Residues 21 to 187 constitute a propeptide, removed in mature form; the sequence is VVQEKLSAVP…AVKLPALPRR (167 aa). Residues Asn191, Asn229, and Asn250 are each glycosylated (N-linked (GlcNAc...) asparagine). The 398-residue stretch at 197 to 594 folds into the Peptidase S53 domain; sequence LITPDCLVEM…MKLKELVLSL (398 aa). Residues Glu272, Asp276, and Ser494 each act as charge relay system in the active site. 2 residues coordinate Ca(2+): Asp536 and Ile537. N-linked (GlcNAc...) asparagine glycosylation occurs at Asn568. Residues Gly572 and Asp574 each contribute to the Ca(2+) site.

Requires Ca(2+) as cofactor. N-glycosylated.

It localises to the secreted. The protein resides in the extracellular space. It catalyses the reaction Release of an N-terminal tripeptide from a polypeptide.. Its function is as follows. Secreted tripeptidyl-peptidase which degrades proteins at acidic pHs and is involved in virulence. This Aspergillus fumigatus (strain ATCC MYA-4609 / CBS 101355 / FGSC A1100 / Af293) (Neosartorya fumigata) protein is Tripeptidyl-peptidase sed4 (sed4).